The sequence spans 893 residues: DNA gyrase subunit A (893 aa).

The 467-residue stretch at 35–501 (LPDVRDGLKP…GLEDLEDEDL (467 aa)) folds into the Topo IIA-type catalytic domain. Residue Tyr123 is the O-(5'-phospho-DNA)-tyrosine intermediate of the active site. The short motif at 528–534 (QNRGGRG) is the GyrA-box element. Positions 810 to 893 (VNEEDDNEEN…ASDNEEDSDE (84 aa)) are disordered. Composition is skewed to acidic residues over residues 812-821 (EEDDNEENAD) and 852-862 (DAEMESVESPE). Positions 863-879 (NDDRIDIRQDFMDRVNE) are enriched in basic and acidic residues. Residues 880–893 (DIESASDNEEDSDE) show a composition bias toward acidic residues.

This sequence belongs to the type II topoisomerase GyrA/ParC subunit family. In terms of assembly, heterotetramer, composed of two GyrA and two GyrB chains. In the heterotetramer, GyrA contains the active site tyrosine that forms a transient covalent intermediate with DNA, while GyrB binds cofactors and catalyzes ATP hydrolysis.

It localises to the cytoplasm. It catalyses the reaction ATP-dependent breakage, passage and rejoining of double-stranded DNA.. Functionally, a type II topoisomerase that negatively supercoils closed circular double-stranded (ds) DNA in an ATP-dependent manner to modulate DNA topology and maintain chromosomes in an underwound state. Negative supercoiling favors strand separation, and DNA replication, transcription, recombination and repair, all of which involve strand separation. Also able to catalyze the interconversion of other topological isomers of dsDNA rings, including catenanes and knotted rings. Type II topoisomerases break and join 2 DNA strands simultaneously in an ATP-dependent manner. This is DNA gyrase subunit A from Staphylococcus epidermidis (strain ATCC 12228 / FDA PCI 1200).